The sequence spans 350 residues: Anthranilate phosphoribosyltransferase (350 aa).

Residues Gly-94, 97–98 (GD), Thr-102, 104–107 (NIST), 122–130 (KHGNRAVSS), and Ser-134 each bind 5-phospho-alpha-D-ribose 1-diphosphate. Gly-94 is an anthranilate binding site. Ser-106 contributes to the Mg(2+) binding site. Asn-125 contacts anthranilate. Arg-180 lines the anthranilate pocket. The Mg(2+) site is built by Asp-239 and Glu-240.

Belongs to the anthranilate phosphoribosyltransferase family. Homodimer. It depends on Mg(2+) as a cofactor.

The enzyme catalyses N-(5-phospho-beta-D-ribosyl)anthranilate + diphosphate = 5-phospho-alpha-D-ribose 1-diphosphate + anthranilate. Its pathway is amino-acid biosynthesis; L-tryptophan biosynthesis; L-tryptophan from chorismate: step 2/5. Functionally, catalyzes the transfer of the phosphoribosyl group of 5-phosphorylribose-1-pyrophosphate (PRPP) to anthranilate to yield N-(5'-phosphoribosyl)-anthranilate (PRA). This Geobacter sulfurreducens (strain ATCC 51573 / DSM 12127 / PCA) protein is Anthranilate phosphoribosyltransferase.